Here is a 185-residue protein sequence, read N- to C-terminus: ATP synthase subunit b 2 (185 aa).

The tract at residues 1 to 25 (MAESHGNAHGATAHTEADGGHKAPF) is disordered. The helical transmembrane segment at 34–56 (ASQLVSLTIAFVALYLISSRLAL) threads the bilayer.

The protein belongs to the ATPase B chain family. F-type ATPases have 2 components, F(1) - the catalytic core - and F(0) - the membrane proton channel. F(1) has five subunits: alpha(3), beta(3), gamma(1), delta(1), epsilon(1). F(0) has three main subunits: a(1), b(2) and c(10-14). The alpha and beta chains form an alternating ring which encloses part of the gamma chain. F(1) is attached to F(0) by a central stalk formed by the gamma and epsilon chains, while a peripheral stalk is formed by the delta and b chains.

It is found in the cell inner membrane. F(1)F(0) ATP synthase produces ATP from ADP in the presence of a proton or sodium gradient. F-type ATPases consist of two structural domains, F(1) containing the extramembraneous catalytic core and F(0) containing the membrane proton channel, linked together by a central stalk and a peripheral stalk. During catalysis, ATP synthesis in the catalytic domain of F(1) is coupled via a rotary mechanism of the central stalk subunits to proton translocation. Its function is as follows. Component of the F(0) channel, it forms part of the peripheral stalk, linking F(1) to F(0). The b'-subunit is a diverged and duplicated form of b found in plants and photosynthetic bacteria. This chain is ATP synthase subunit b 2 (atpF2), found in Nitrobacter winogradskyi (strain ATCC 25391 / DSM 10237 / CIP 104748 / NCIMB 11846 / Nb-255).